A 148-amino-acid chain; its full sequence is UPF0756 membrane protein ETA_17460 (148 aa).

The next 4 membrane-spanning stretches (helical) occupy residues 14–34, 51–71, 80–100, and 112–132; these read ALSY…LIVI, MTVG…SGTI, FLHW…WLGG, and VVGG…GVPV.

This sequence belongs to the UPF0756 family.

The protein localises to the cell membrane. The chain is UPF0756 membrane protein ETA_17460 from Erwinia tasmaniensis (strain DSM 17950 / CFBP 7177 / CIP 109463 / NCPPB 4357 / Et1/99).